A 737-amino-acid polypeptide reads, in one-letter code: O-GlcNAcase BT_4395 (737 aa).

A signal peptide spans 1 to 21; that stretch reads MKNNKIYLLGACLLCAVTTFA. The catalytic domain stretch occupies residues 148 to 433; it reads VRYRGVVEGF…WKDAIRTILP (286 aa). One can recognise a GH84 domain in the interval 149 to 416; the sequence is RYRGVVEGFY…SVASYAWNPA (268 aa). The a protein site is built by glycine 156, lysine 187, and aspartate 263. The Proton donor role is filled by aspartate 264. A protein contacts are provided by residues tyrosine 303, 358 to 360, aspartate 365, and asparagine 393; that span reads WWN.

It belongs to the glycosyl hydrolase 84 family. Homodimer.

The catalysed reaction is 3-O-(N-acetyl-beta-D-glucosaminyl)-L-seryl-[protein] + H2O = N-acetyl-D-glucosamine + L-seryl-[protein]. It catalyses the reaction 3-O-(N-acetyl-beta-D-glucosaminyl)-L-threonyl-[protein] + H2O = L-threonyl-[protein] + N-acetyl-D-glucosamine. With respect to regulation, inhibited by 1,2-dideoxy-2'-methyl-alpha-D-glucopyranoso-[2,1-d]-delta 2'-thiazoline (NAG-thiazoline) and O-(2-acetamido-2-deoxy-D-glucopyranosylidene)amino-N-phenyl-carbamate (PUGNAc). Not inhibited by Streptozotocin. Functionally, can hydrolyze the glycosidic link of O-GlcNAcylated proteins. Can use p-nitrophenyl-beta-GlcNAc and 4-methylumbelliferone-GlcNAc as substrates (in vitro). The sequence is that of O-GlcNAcase BT_4395 from Bacteroides thetaiotaomicron (strain ATCC 29148 / DSM 2079 / JCM 5827 / CCUG 10774 / NCTC 10582 / VPI-5482 / E50).